A 190-amino-acid chain; its full sequence is Elongation factor P-like protein (190 aa).

The protein belongs to the elongation factor P family.

The sequence is that of Elongation factor P-like protein from Pectobacterium carotovorum subsp. carotovorum (strain PC1).